The following is a 95-amino-acid chain: Putative pterin-4-alpha-carbinolamine dehydratase (95 aa).

It belongs to the pterin-4-alpha-carbinolamine dehydratase family.

It catalyses the reaction (4aS,6R)-4a-hydroxy-L-erythro-5,6,7,8-tetrahydrobiopterin = (6R)-L-erythro-6,7-dihydrobiopterin + H2O. In Solibacter usitatus (strain Ellin6076), this protein is Putative pterin-4-alpha-carbinolamine dehydratase.